Here is a 92-residue protein sequence, read N- to C-terminus: Large ribosomal subunit protein bL25 (92 aa).

Belongs to the bacterial ribosomal protein bL25 family. As to quaternary structure, part of the 50S ribosomal subunit; part of the 5S rRNA/L5/L18/L25 subcomplex. Contacts the 5S rRNA. Binds to the 5S rRNA independently of L5 and L18.

In terms of biological role, this is one of the proteins that binds to the 5S RNA in the ribosome where it forms part of the central protuberance. This chain is Large ribosomal subunit protein bL25, found in Vibrio campbellii (strain ATCC BAA-1116).